The sequence spans 205 residues: MVEPREQFFQDLLSAVDQQMDTVKNDIKDIMKEKTSFMVSFENFIERYDTMEKNIQDLQNKYEEMAANLMTVMTDTKIQLGAIIAQLEILMINGTPLPAKKTTIKEAMPLPLSNTNNEQTSPPASGKTSETPKKNPTNAMFFTRSEWASSNTFREKFLTPEIQAILDEQFANKTGIERLHAEGLYMWRTQFSDEQKKMVKEMMKK.

Positions Q10–D75 form a coiled coil. Residues P111–N138 form a disordered region. Residues L112–N138 show a composition bias toward polar residues.

The protein belongs to the asfivirus K205R family.

Its subcellular location is the host cytoplasm. Induces host endoplasmic reticulum stress and consequently activates autophagy and NF-kappa-B signaling pathway. In turn, may induce autophagy-mediated STING1 degradation and innate immune evasion. This is an uncharacterized protein from Ornithodoros (relapsing fever ticks).